Here is a 354-residue protein sequence, read N- to C-terminus: Biotin synthase (354 aa).

Residues 40–258 enclose the Radical SAM core domain; that stretch reads NEVQVSTLLS…IAVARILMPR (219 aa). The [4Fe-4S] cluster site is built by Cys55, Cys59, and Cys62. [2Fe-2S] cluster-binding residues include Cys99, Cys130, Cys190, and Arg262.

It belongs to the radical SAM superfamily. Biotin synthase family. In terms of assembly, homodimer. [4Fe-4S] cluster serves as cofactor. The cofactor is [2Fe-2S] cluster.

The enzyme catalyses (4R,5S)-dethiobiotin + (sulfur carrier)-SH + 2 reduced [2Fe-2S]-[ferredoxin] + 2 S-adenosyl-L-methionine = (sulfur carrier)-H + biotin + 2 5'-deoxyadenosine + 2 L-methionine + 2 oxidized [2Fe-2S]-[ferredoxin]. It functions in the pathway cofactor biosynthesis; biotin biosynthesis; biotin from 7,8-diaminononanoate: step 2/2. Its function is as follows. Catalyzes the conversion of dethiobiotin (DTB) to biotin by the insertion of a sulfur atom into dethiobiotin via a radical-based mechanism. The chain is Biotin synthase from Hahella chejuensis (strain KCTC 2396).